The chain runs to 110 residues: Nucleoid-associated protein KPK_4227 (110 aa).

Residues 1–22 (MFGGKGGLGNLMKQAQQMQDKM) form a disordered region.

Belongs to the YbaB/EbfC family. Homodimer.

Its subcellular location is the cytoplasm. The protein resides in the nucleoid. Binds to DNA and alters its conformation. May be involved in regulation of gene expression, nucleoid organization and DNA protection. The chain is Nucleoid-associated protein KPK_4227 from Klebsiella pneumoniae (strain 342).